The sequence spans 46 residues: Large ribosomal subunit protein bL33A (46 aa).

This sequence belongs to the bacterial ribosomal protein bL33 family.

The sequence is that of Large ribosomal subunit protein bL33A from Mesomycoplasma hyopneumoniae (strain 7448) (Mycoplasma hyopneumoniae).